We begin with the raw amino-acid sequence, 1057 residues long: Carbamoyl phosphate synthase large chain (1057 aa).

The tract at residues 1 to 401 is carboxyphosphate synthetic domain; the sequence is MPKRQDIETI…SLLKAIRSLE (401 aa). ATP contacts are provided by Arg-129, Arg-169, Gly-175, Gly-176, Lys-208, Ile-210, Glu-215, Gly-241, Ile-242, His-243, Gln-284, and Glu-298. The ATP-grasp 1 domain maps to 133-327; sequence RTLMNDLGVP…IAKLAAKIAI (195 aa). Positions 284, 298, and 300 each coordinate Mg(2+). The Mn(2+) site is built by Gln-284, Glu-298, and Asn-300. An oligomerization domain region spans residues 402-546; sequence YGVHHLGLPN…YGTYEYENES (145 aa). The tract at residues 547-929 is carbamoyl phosphate synthetic domain; the sequence is VVTEKEKILV…ALFKGLTASG (383 aa). An ATP-grasp 2 domain is found at 671-861; the sequence is EALLHTIDVP…MAQLAMRAII (191 aa). 10 residues coordinate ATP: Arg-707, Arg-746, Leu-748, Glu-752, Gly-777, Val-778, His-779, Ser-780, Gln-820, and Glu-832. Mg(2+) is bound by residues Gln-820, Glu-832, and Asn-834. Mn(2+)-binding residues include Gln-820, Glu-832, and Asn-834. Residues 930–1057 enclose the MGS-like domain; that stretch reads MEVKDHGTVL…ESMTFTMKNM (128 aa). Positions 930-1057 are allosteric domain; sequence MEVKDHGTVL…ESMTFTMKNM (128 aa).

This sequence belongs to the CarB family. Composed of two chains; the small (or glutamine) chain promotes the hydrolysis of glutamine to ammonia, which is used by the large (or ammonia) chain to synthesize carbamoyl phosphate. Tetramer of heterodimers (alpha,beta)4. It depends on Mg(2+) as a cofactor. Requires Mn(2+) as cofactor.

It catalyses the reaction hydrogencarbonate + L-glutamine + 2 ATP + H2O = carbamoyl phosphate + L-glutamate + 2 ADP + phosphate + 2 H(+). The enzyme catalyses hydrogencarbonate + NH4(+) + 2 ATP = carbamoyl phosphate + 2 ADP + phosphate + 2 H(+). It functions in the pathway amino-acid biosynthesis; L-arginine biosynthesis; carbamoyl phosphate from bicarbonate: step 1/1. The protein operates within pyrimidine metabolism; UMP biosynthesis via de novo pathway; (S)-dihydroorotate from bicarbonate: step 1/3. Functionally, large subunit of the glutamine-dependent carbamoyl phosphate synthetase (CPSase). CPSase catalyzes the formation of carbamoyl phosphate from the ammonia moiety of glutamine, carbonate, and phosphate donated by ATP, constituting the first step of 2 biosynthetic pathways, one leading to arginine and/or urea and the other to pyrimidine nucleotides. The large subunit (synthetase) binds the substrates ammonia (free or transferred from glutamine from the small subunit), hydrogencarbonate and ATP and carries out an ATP-coupled ligase reaction, activating hydrogencarbonate by forming carboxy phosphate which reacts with ammonia to form carbamoyl phosphate. The sequence is that of Carbamoyl phosphate synthase large chain from Staphylococcus saprophyticus subsp. saprophyticus (strain ATCC 15305 / DSM 20229 / NCIMB 8711 / NCTC 7292 / S-41).